The following is a 682-amino-acid chain: Potassium-transporting ATPase ATP-binding subunit (682 aa).

4 consecutive transmembrane segments (helical) span residues 34–54, 58–78, 219–239, and 254–274; these read PVMF…LAMV, IAGS…TVLF, IALT…TATL, and VLVA…LSAI. D307 functions as the 4-aspartylphosphate intermediate in the catalytic mechanism. ATP is bound by residues D344, E348, 377 to 384, and K395; that span reads FTAQSRMS. Mg(2+)-binding residues include D518 and D522. A run of 3 helical transmembrane segments spans residues 588–608, 616–636, and 662–682; these read FAII…LNVM, AILS…PLAL, and LVVP…LGLA.

The protein belongs to the cation transport ATPase (P-type) (TC 3.A.3) family. Type IA subfamily. In terms of assembly, the system is composed of three essential subunits: KdpA, KdpB and KdpC.

Its subcellular location is the cell inner membrane. The enzyme catalyses K(+)(out) + ATP + H2O = K(+)(in) + ADP + phosphate + H(+). Functionally, part of the high-affinity ATP-driven potassium transport (or Kdp) system, which catalyzes the hydrolysis of ATP coupled with the electrogenic transport of potassium into the cytoplasm. This subunit is responsible for energy coupling to the transport system and for the release of the potassium ions to the cytoplasm. This Salmonella agona (strain SL483) protein is Potassium-transporting ATPase ATP-binding subunit.